We begin with the raw amino-acid sequence, 244 residues long: tRNA (guanine-N(1)-)-methyltransferase (244 aa).

S-adenosyl-L-methionine contacts are provided by residues G112 and 131–136 (LGDFIL). Residues 211–244 (IKRTSDRRPDLLEKWQQEKKPGSREQGSREQGEK) are disordered.

Belongs to the RNA methyltransferase TrmD family. In terms of assembly, homodimer.

The protein resides in the cytoplasm. It catalyses the reaction guanosine(37) in tRNA + S-adenosyl-L-methionine = N(1)-methylguanosine(37) in tRNA + S-adenosyl-L-homocysteine + H(+). Its function is as follows. Specifically methylates guanosine-37 in various tRNAs. The protein is tRNA (guanine-N(1)-)-methyltransferase of Trichormus variabilis (strain ATCC 29413 / PCC 7937) (Anabaena variabilis).